The following is a 59-amino-acid chain: Protein HOR7 (59 aa).

The signal sequence occupies residues 1 to 19; that stretch reads MKLSQVVVSAVAFTGLVSA.

The protein to yeast DDR2.

The protein is Protein HOR7 (HOR7) of Saccharomyces cerevisiae (strain ATCC 204508 / S288c) (Baker's yeast).